Here is a 547-residue protein sequence, read N- to C-terminus: Chaperonin GroEL (547 aa).

ATP contacts are provided by residues 30–33 (TLGP), Lys-51, 87–91 (DGTTT), Gly-414, 478–480 (NAA), and Asp-494.

The protein belongs to the chaperonin (HSP60) family. Forms a cylinder of 14 subunits composed of two heptameric rings stacked back-to-back. Interacts with the co-chaperonin GroES.

Its subcellular location is the cytoplasm. The enzyme catalyses ATP + H2O + a folded polypeptide = ADP + phosphate + an unfolded polypeptide.. In terms of biological role, together with its co-chaperonin GroES, plays an essential role in assisting protein folding. The GroEL-GroES system forms a nano-cage that allows encapsulation of the non-native substrate proteins and provides a physical environment optimized to promote and accelerate protein folding. The chain is Chaperonin GroEL from Klebsiella pneumoniae.